The primary structure comprises 1793 residues: Chitin synthase 5 (1793 aa).

Residues 1-28 (MTNPRMSMYSLASEAPGGNRGTGQQSTQ) are disordered. N-linked (GlcNAc...) asparagine glycans are attached at residues N70, N164, N638, N664, and N669. Transmembrane regions (helical) follow at residues 750–770 (VWVF…LRYV) and 786–806 (LVLC…IVAF). In terms of domain architecture, Cytochrome b5 heme-binding spans 815–877 (DKAYSQKEVD…GMNLDDYFVA (63 aa)). N-linked (GlcNAc...) asparagine glycans are attached at residues N897, N1019, and N1023. A helical transmembrane segment spans residues 1056–1076 (LLLAFSIMLCAVILLKFVSAL). N1421 carries N-linked (GlcNAc...) asparagine glycosylation. A run of 3 helical transmembrane segments spans residues 1452–1472 (LFGT…IYLV), 1479–1499 (FPLI…LIFI), and 1507–1527 (IGWM…LPIY). N-linked (GlcNAc...) asparagine glycans are attached at residues N1534 and N1705. Residues 1735 to 1791 (GPDDGMIVEAIRTVLMEVDLDTVTKKQVRALVEQRLQSELVGERRTFMDRQIDHELA) enclose the DEK-C domain.

Belongs to the chitin synthase family. Class V subfamily.

It is found in the cell membrane. It carries out the reaction [(1-&gt;4)-N-acetyl-beta-D-glucosaminyl](n) + UDP-N-acetyl-alpha-D-glucosamine = [(1-&gt;4)-N-acetyl-beta-D-glucosaminyl](n+1) + UDP + H(+). Functionally, polymerizes chitin, a structural polymer of the cell wall and septum, by transferring the sugar moiety of UDP-GlcNAc to the non-reducing end of the growing chitin polymer. Regulates Germination and Tolerance to Hyperosmotic Stress. Plays a key role in pathogenicity. Likely contributes to post-penetration virulence. The sequence is that of Chitin synthase 5 from Verticillium dahliae (strain VdLs.17 / ATCC MYA-4575 / FGSC 10137) (Verticillium wilt).